The primary structure comprises 620 residues: GTP-binding protein At3g49725, chloroplastic (620 aa).

The N-terminal 65 residues, 1–65 (MSVTTSFGIW…SSFLARDRLR (65 aa)), are a transit peptide targeting the chloroplast. Residues 57–100 (SFLARDRLRSKTPSSSPFSSKRHTPKTSEIEEESTPKDSVLLNP) are disordered. One can recognise a Hflx-type G domain in the interval 346 to 585 (GTIAVVGYTN…LIDDKMKEKK (240 aa)). GTP-binding positions include 352-359 (GYTNAGKS), 377-381 (FATLD), 399-402 (DTVG), and 468-471 (NKID). Residues Ser-359 and Thr-379 each coordinate Mg(2+). Composition is skewed to acidic residues over residues 478 to 497 (EEEK…EDEA) and 511 to 521 (TVDEDQIQNGD). Residues 478–521 (EEEKYLDDGEGVGEEDEDEADLKAEETVDASEATVDEDQIQNGD) form a disordered region. 563 to 565 (SAL) provides a ligand contact to GTP. The disordered stretch occupies residues 597–620 (LHKRKWRPPRNDDEEERLIPLDQR).

This sequence belongs to the TRAFAC class OBG-HflX-like GTPase superfamily. HflX GTPase family. Requires Mg(2+) as cofactor.

Its subcellular location is the plastid. The protein localises to the chloroplast. This Arabidopsis thaliana (Mouse-ear cress) protein is GTP-binding protein At3g49725, chloroplastic.